Consider the following 369-residue polypeptide: Serine proteinase inhibitor 1 (369 aa).

Belongs to the serpin family. Poxviruses subfamily.

Its function is as follows. Important in virulence. The protein is Serine proteinase inhibitor 1 (SPI-1) of Oryctolagus cuniculus (Rabbit).